We begin with the raw amino-acid sequence, 335 residues long: Transmembrane protein 120B-B (335 aa).

A coiled-coil region spans residues 1–39 (MSLQKCQEEWGELEKEFQQLQETHKVYKQKLEELSSLQN). The next 6 helical transmembrane spans lie at 100–116 (SLYL…TLLS), 130–150 (FKLY…FVLH), 157–177 (VFNF…SILI), 193–213 (VSTF…YQMF), 268–288 (FLLP…MTLF), and 300–320 (QVFV…LTTL).

The protein belongs to the TMEM120 family.

The protein localises to the nucleus inner membrane. Functionally, necessary for efficient adipogenesis. Does not show ion channel activity. This Xenopus laevis (African clawed frog) protein is Transmembrane protein 120B-B (tmem120b-b).